Reading from the N-terminus, the 239-residue chain is Small ribosomal subunit protein uS3c (239 aa).

The region spanning 43–139 is the KH type-2 domain; the sequence is IKNYIQKNRK…RFNISIEKVK (97 aa). The disordered stretch occupies residues 50–74; the sequence is NRKKGSNRKIESDSSSEVITHNRKM.

It belongs to the universal ribosomal protein uS3 family. As to quaternary structure, part of the 30S ribosomal subunit.

The protein resides in the plastid. The protein localises to the chloroplast. This Hordeum vulgare (Barley) protein is Small ribosomal subunit protein uS3c (rps3).